A 229-amino-acid polypeptide reads, in one-letter code: Putative N-acetylmannosamine-6-phosphate 2-epimerase 2 (229 aa).

Belongs to the NanE family.

It catalyses the reaction an N-acyl-D-glucosamine 6-phosphate = an N-acyl-D-mannosamine 6-phosphate. It participates in amino-sugar metabolism; N-acetylneuraminate degradation; D-fructose 6-phosphate from N-acetylneuraminate: step 3/5. Functionally, converts N-acetylmannosamine-6-phosphate (ManNAc-6-P) to N-acetylglucosamine-6-phosphate (GlcNAc-6-P). The polypeptide is Putative N-acetylmannosamine-6-phosphate 2-epimerase 2 (Salmonella paratyphi A (strain ATCC 9150 / SARB42)).